Reading from the N-terminus, the 95-residue chain is Defensin-A3 (95 aa).

A signal peptide spans 1-19; that stretch reads MRTLGLLLALLFLAAQTPA. A propeptide spanning residues 20-61 is cleaved from the precursor; the sequence is QLMGEEAEEATGRPEATEAQEAAAALMAARAADRHVTDPEQQ. Intrachain disulfides connect C66-C93, C68-C82, and C72-C92.

Belongs to the alpha-defensin family. In terms of tissue distribution, highly expressed in spleen, and expressed at lower levels in intestin and lung.

It localises to the secreted. In terms of biological role, has antimicrobial activity. This chain is Defensin-A3, found in Ornithorhynchus anatinus (Duckbill platypus).